The following is a 127-amino-acid chain: Protein KRTCAP2 homolog (127 aa).

Transmembrane regions (helical) follow at residues Leu-13–Phe-33, Ile-41–Ile-61, Val-65–His-85, and Val-87–Ser-107.

The protein belongs to the KRTCAP2 family. As to quaternary structure, component of the oligosaccharyltransferase (OST) complex.

It localises to the membrane. In terms of biological role, subunit of the oligosaccharyl transferase (OST) complex that catalyzes the initial transfer of a defined glycan (Glc(3)Man(9)GlcNAc(2) in eukaryotes) from the lipid carrier dolichol-pyrophosphate to an asparagine residue within an Asn-X-Ser/Thr consensus motif in nascent polypeptide chains, the first step in protein N-glycosylation. N-glycosylation occurs cotranslationally and the complex associates with the Sec61 complex at the channel-forming translocon complex that mediates protein translocation across the endoplasmic reticulum (ER). All subunits are required for a maximal enzyme activity. The protein is Protein KRTCAP2 homolog of Dictyostelium discoideum (Social amoeba).